Consider the following 446-residue polypeptide: Tubulin beta-1 chain (446 aa).

Positions 1-4 (MREI) match the MREI motif motif. Positions 11, 69, 138, 142, 143, 144, 204, and 226 each coordinate GTP. Glu-69 contacts Mg(2+). The segment at 426-446 (QDATAEEEGEFEEEGEYEDGA) is disordered. Over residues 429–446 (TAEEEGEFEEEGEYEDGA) the composition is skewed to acidic residues. 5-glutamyl polyglutamate is present on Glu-438.

It belongs to the tubulin family. Dimer of alpha and beta chains. A typical microtubule is a hollow water-filled tube with an outer diameter of 25 nm and an inner diameter of 15 nM. Alpha-beta heterodimers associate head-to-tail to form protofilaments running lengthwise along the microtubule wall with the beta-tubulin subunit facing the microtubule plus end conferring a structural polarity. Microtubules usually have 13 protofilaments but different protofilament numbers can be found in some organisms and specialized cells. Requires Mg(2+) as cofactor. Some glutamate residues at the C-terminus are polyglycylated, resulting in polyglycine chains on the gamma-carboxyl group. Glycylation is mainly limited to tubulin incorporated into axonemes (cilia and flagella) whereas glutamylation is prevalent in neuronal cells, centrioles, axonemes, and the mitotic spindle. Both modifications can coexist on the same protein on adjacent residues, and lowering polyglycylation levels increases polyglutamylation, and reciprocally. The precise function of polyglycylation is still unclear. In terms of processing, some glutamate residues at the C-terminus are polyglutamylated, resulting in polyglutamate chains on the gamma-carboxyl group. Polyglutamylation plays a key role in microtubule severing by spastin (SPAST). SPAST preferentially recognizes and acts on microtubules decorated with short polyglutamate tails: severing activity by SPAST increases as the number of glutamates per tubulin rises from one to eight, but decreases beyond this glutamylation threshold. In terms of tissue distribution, brain.

It is found in the cytoplasm. The protein resides in the cytoskeleton. Functionally, tubulin is the major constituent of microtubules, a cylinder consisting of laterally associated linear protofilaments composed of alpha- and beta-tubulin heterodimers. Microtubules grow by the addition of GTP-tubulin dimers to the microtubule end, where a stabilizing cap forms. Below the cap, tubulin dimers are in GDP-bound state, owing to GTPase activity of alpha-tubulin. In Notothenia neglecta (Yellowbelly rockcod), this protein is Tubulin beta-1 chain (tubb1).